A 450-amino-acid polypeptide reads, in one-letter code: Plasminogen-binding protein PgbA (450 aa).

Composition is skewed to basic and acidic residues over residues Glu-262–Lys-273, Leu-284–Lys-310, and Lys-317–Asn-362. The disordered stretch occupies residues Glu-262–Lys-450. A compositionally biased stretch (polar residues) spans Gln-363–Leu-386. Residues Ser-389–Lys-450 are compositionally biased toward basic and acidic residues.

It localises to the cell surface. Functionally, binds plasminogen, specifically, and in a concentration and lysine-dependent manner. Plasminogen is the precursor of plasmin, a serine protease that cleaves fibrin, fibronectin, laminin and vitronectin. Acquisition of plasminogen/plasmin could enable H.pylori to degrade host components. This Helicobacter pylori (strain J99 / ATCC 700824) (Campylobacter pylori J99) protein is Plasminogen-binding protein PgbA (pgbA).